A 576-amino-acid polypeptide reads, in one-letter code: Protein HYPER-SENSITIVITY-RELATED 4 (576 aa).

Residues 55-75 form a helical membrane-spanning segment; it reads LATAKTVLTTAASVAATAMLA. 306-313 is an ATP binding site; it reads GPPGTGKS. The disordered stretch occupies residues 508–532; the sequence is DKAKTEKQELENKKKTKEGTDSVVK.

This sequence belongs to the AAA ATPase family. BCS1 subfamily. In terms of assembly, binds to the Yariv phenylglycoside (beta-D-Glc)(3). The cofactor is Mg(2+).

It localises to the membrane. It catalyses the reaction ATP + H2O = ADP + phosphate + H(+). The polypeptide is Protein HYPER-SENSITIVITY-RELATED 4 (Arabidopsis thaliana (Mouse-ear cress)).